The primary structure comprises 225 residues: Enolase-phosphatase E1 (225 aa).

The protein belongs to the HAD-like hydrolase superfamily. MasA/MtnC family. Monomer. The cofactor is Mg(2+).

It carries out the reaction 5-methylsulfanyl-2,3-dioxopentyl phosphate + H2O = 1,2-dihydroxy-5-(methylsulfanyl)pent-1-en-3-one + phosphate. It functions in the pathway amino-acid biosynthesis; L-methionine biosynthesis via salvage pathway; L-methionine from S-methyl-5-thio-alpha-D-ribose 1-phosphate: step 3/6. Its pathway is amino-acid biosynthesis; L-methionine biosynthesis via salvage pathway; L-methionine from S-methyl-5-thio-alpha-D-ribose 1-phosphate: step 4/6. Its function is as follows. Bifunctional enzyme that catalyzes the enolization of 2,3-diketo-5-methylthiopentyl-1-phosphate (DK-MTP-1-P) into the intermediate 2-hydroxy-3-keto-5-methylthiopentenyl-1-phosphate (HK-MTPenyl-1-P), which is then dephosphorylated to form the acireductone 1,2-dihydroxy-3-keto-5-methylthiopentene (DHK-MTPene). The chain is Enolase-phosphatase E1 from Shewanella denitrificans (strain OS217 / ATCC BAA-1090 / DSM 15013).